A 214-amino-acid chain; its full sequence is Thymidylate kinase (214 aa).

12–19 is an ATP binding site; it reads GLDGSGKS.

The protein belongs to the thymidylate kinase family.

The enzyme catalyses dTMP + ATP = dTDP + ADP. Phosphorylation of dTMP to form dTDP in both de novo and salvage pathways of dTTP synthesis. The protein is Thymidylate kinase of Bdellovibrio bacteriovorus (strain ATCC 15356 / DSM 50701 / NCIMB 9529 / HD100).